Consider the following 212-residue polypeptide: Thymidylate kinase (212 aa).

Gly11–Thr18 lines the ATP pocket.

The protein belongs to the thymidylate kinase family.

It catalyses the reaction dTMP + ATP = dTDP + ADP. Functionally, phosphorylation of dTMP to form dTDP in both de novo and salvage pathways of dTTP synthesis. The polypeptide is Thymidylate kinase (Streptococcus pneumoniae (strain ATCC 700669 / Spain 23F-1)).